Consider the following 204-residue polypeptide: Probable chorismate pyruvate-lyase (204 aa).

Positions 78, 131, and 190 each coordinate substrate.

This sequence belongs to the UbiC family.

The protein resides in the cytoplasm. The enzyme catalyses chorismate = 4-hydroxybenzoate + pyruvate. It participates in cofactor biosynthesis; ubiquinone biosynthesis. Removes the pyruvyl group from chorismate, with concomitant aromatization of the ring, to provide 4-hydroxybenzoate (4HB) for the ubiquinone pathway. This Shewanella frigidimarina (strain NCIMB 400) protein is Probable chorismate pyruvate-lyase.